The following is a 454-amino-acid chain: Cytochrome b-c1 complex subunit 2, mitochondrial (454 aa).

The transit peptide at M1–P35 directs the protein to the mitochondrion.

Belongs to the peptidase M16 family. UQCRC2/QCR2 subfamily. In terms of assembly, component of the ubiquinol-cytochrome c oxidoreductase (cytochrome b-c1 complex, complex III, CIII), a multisubunit enzyme composed of 10 subunits. The complex is composed of 3 respiratory subunits cytochrome b (cob), cytochrome c1 (cyt-1) and Rieske protein (fes-1), 2 core protein subunits pep and ucr-1, and 5 low-molecular weight protein subunits qcr6, qcr7, qcr8, qcr9 and probably NCU16844/qcr10. The complex exists as an obligatory dimer and forms supercomplexes (SCs) in the inner mitochondrial membrane with NADH-ubiquinone oxidoreductase (complex I, CI) and cytochrome c oxidase (complex IV, CIV), resulting in different assemblies (supercomplexes SCI(1)III(2), SCIII(2)IV(1) and SCIII(2)IV(2) as well as higher order I(x)III(y)IV(z) megacomplexes).

Its subcellular location is the mitochondrion inner membrane. In terms of biological role, component of the ubiquinol-cytochrome c oxidoreductase, a multisubunit transmembrane complex that is part of the mitochondrial electron transport chain which drives oxidative phosphorylation. The respiratory chain contains 3 multisubunit complexes succinate dehydrogenase (complex II, CII), ubiquinol-cytochrome c oxidoreductase (cytochrome b-c1 complex, complex III, CIII) and cytochrome c oxidase (complex IV, CIV), that cooperate to transfer electrons derived from NADH and succinate to molecular oxygen, creating an electrochemical gradient over the inner membrane that drives transmembrane transport and the ATP synthase. The cytochrome b-c1 complex catalyzes electron transfer from ubiquinol to cytochrome c, linking this redox reaction to translocation of protons across the mitochondrial inner membrane, with protons being carried across the membrane as hydrogens on the quinol. In the process called Q cycle, 2 protons are consumed from the matrix, 4 protons are released into the intermembrane space and 2 electrons are passed to cytochrome c. The chain is Cytochrome b-c1 complex subunit 2, mitochondrial (ucr-1) from Neurospora crassa (strain ATCC 24698 / 74-OR23-1A / CBS 708.71 / DSM 1257 / FGSC 987).